The primary structure comprises 316 residues: Phosphoribosylaminoimidazole-succinocarboxamide synthase (316 aa).

This sequence belongs to the SAICAR synthetase family.

It carries out the reaction 5-amino-1-(5-phospho-D-ribosyl)imidazole-4-carboxylate + L-aspartate + ATP = (2S)-2-[5-amino-1-(5-phospho-beta-D-ribosyl)imidazole-4-carboxamido]succinate + ADP + phosphate + 2 H(+). The protein operates within purine metabolism; IMP biosynthesis via de novo pathway; 5-amino-1-(5-phospho-D-ribosyl)imidazole-4-carboxamide from 5-amino-1-(5-phospho-D-ribosyl)imidazole-4-carboxylate: step 1/2. The protein is Phosphoribosylaminoimidazole-succinocarboxamide synthase of Flavobacterium psychrophilum (strain ATCC 49511 / DSM 21280 / CIP 103535 / JIP02/86).